The primary structure comprises 250 residues: Anaphase-promoting complex subunit DOC1 (250 aa).

A DOC domain is found at 60-246 (PTPENLQHMF…LPETNNVFQD (187 aa)).

This sequence belongs to the APC10 family. In terms of assembly, the APC/C is composed of at least 13 subunits that stay tightly associated throughout the cell cycle: APC1, APC2, APC4, APC5, APC9, APC11, CDC16, CDC23, CDC26, CDC27, DOC1, MND2 and SWM1.

The protein resides in the cytoplasm. The protein localises to the nucleus. The protein operates within protein modification; protein ubiquitination. Its function is as follows. Component of the anaphase promoting complex/cyclosome (APC/C), a cell cycle-regulated E3 ubiquitin-protein ligase complex that controls progression through mitosis and the G1 phase of the cell cycle. The APC/C is thought to confer substrate specificity and, in the presence of ubiquitin-conjugating E2 enzymes, it catalyzes the formation of protein-ubiquitin conjugates that are subsequently degraded by the 26S proteasome. In early mitosis, the APC/C is activated by CDC20 and targets securin PDS1, the B-type cyclin CLB5, and other anaphase inhibitory proteins for proteolysis, thereby triggering the separation of sister chromatids at the metaphase-to-anaphase transition. In late mitosis and in G1, degradation of CLB5 allows activation of the APC/C by CDH1, which is needed to destroy CDC20 and the B-type cyclin CLB2 to allow exit from mitosis and creating the low CDK state necessary for cytokinesis and for reforming prereplicative complexes in G1 prior to another round of replication. DOC1 is required, together with the coactivators CDH1 and CDC20, for recognition and binding of the substrates. The polypeptide is Anaphase-promoting complex subunit DOC1 (DOC1) (Saccharomyces cerevisiae (strain ATCC 204508 / S288c) (Baker's yeast)).